The primary structure comprises 262 residues: MNDKVTAVRDVWRYEQGEISKVEDRMVTEFPLTVILNGSEFVTLVCTPEHIEELVIGFLASEGVIRFQKEIKRFTIDESLGFVYVDLVHPETLDQKDYTKRVIGSCCGKGRHFYFQQDVKTAKTAVSQIKISPEACLALMKDMQQGSGTFQDTGGVHNAALCDTEKLLLMRTDIGRHNALDKLYGHCLLNGMSVRDKLIVFSGRISSEVLLKAAKIGVSIVISKSAPTELAIQMAEELNITAIGFVRNGSFNVYTHPERIRE.

Cysteine 107 (cysteine persulfide intermediate) is an active-site residue.

It belongs to the FdhD family.

Its subcellular location is the cytoplasm. In terms of biological role, required for formate dehydrogenase (FDH) activity. Acts as a sulfur carrier protein that transfers sulfur from IscS to the molybdenum cofactor prior to its insertion into FDH. This chain is Sulfur carrier protein FdhD, found in Bacillus subtilis (strain 168).